Reading from the N-terminus, the 434-residue chain is Trigger factor (434 aa).

The PPIase FKBP-type domain maps to 160–245 (GDKVKMNFVG…LTEVLAANLP (86 aa)).

It belongs to the FKBP-type PPIase family. Tig subfamily.

Its subcellular location is the cytoplasm. It catalyses the reaction [protein]-peptidylproline (omega=180) = [protein]-peptidylproline (omega=0). In terms of biological role, involved in protein export. Acts as a chaperone by maintaining the newly synthesized protein in an open conformation. Functions as a peptidyl-prolyl cis-trans isomerase. The protein is Trigger factor of Shewanella sp. (strain ANA-3).